We begin with the raw amino-acid sequence, 1084 residues long: MKYHVGIDVGTFSVGLAAIEVDDAGMPIKTLSLVSHIHDSGLDPDEIKSAVTRLASSGIARRTRRLYRRKRRRLQQLDKFIQRQGWPVIELEDYSDPLYPWKVRAELAASYIADEKERGEKLSVALRHIARHRGWRNPYAKVSSLYLPDGPSDAFKAIREEIKRASGQPVPETATVGQMVTLCELGTLKLRGEGGVLSARLQQSDYAREIQEICRMQEIGQELYRKIIDVVFAAESPKGSASSRVGKDPLQPGKNRALKASDAFQRYRIAALIGNLRVRVDGEKRILSVEEKNLVFDHLVNLTPKKEPEWVTIAEILGIDRGQLIGTATMTDDGERAGARPPTHDTNRSIVNSRIAPLVDWWKTASALEQHAMVKALSNAEVDDFDSPEGAKVQAFFADLDDDVHAKLDSLHLPVGRAAYSEDTLVRLTRRMLSDGVDLYTARLQEFGIEPSWTPPTPRIGEPVGNPAVDRVLKTVSRWLESATKTWGAPERVIIEHVREGFVTEKRAREMDGDMRRRAARNAKLFQEMQEKLNVQGKPSRADLWRYQSVQRQNCQCAYCGSPITFSNSEMDHIVPRAGQGSTNTRENLVAVCHRCNQSKGNTPFAIWAKNTSIEGVSVKEAVERTRHWVTDTGMRSTDFKKFTKAVVERFQRATMDEEIDARSMESVAWMANELRSRVAQHFASHGTTVRVYRGSLTAEARRASGISGKLKFFDGVGKSRLDRRHHAIDAAVIAFTSDYVAETLAVRSNLKQSQAHRQEAPQWREFTGKDAEHRAAWRVWCQKMEKLSALLTEDLRDDRVVVMSNVRLRLGNGSAHKETIGKLSKVKLSSQLSVSDIDKASSEALWCALTREPGFDPKEGLPANPERHIRVNGTHVYAGDNIGLFPVSAGSIALRGGYAELGSSFHHARVYKITSGKKPAFAMLRVYTIDLLPYRNQDLFSVELKPQTMSMRQAEKKLRDALATGNAEYLGWLVVDDELVVDTSKIATDQVKAVEAELGTIRRWRVDGFFSPSKLRLRPLQMSKEGIKKESAPELSKIIDRPGWLPAVNKLFSDGNVTVVRRDSLGRVRLESTAHLPVTWKVQ.

Aspartate 8 serves as the catalytic For RuvC-like nuclease domain. Mn(2+) is bound by residues aspartate 8, glutamate 496, and glutamate 500. Positions 504 to 665 (TEKRAREMDG…MDEEIDARSM (162 aa)) constitute an HNH Cas9-type domain. The Proton acceptor for HNH nuclease domain role is filled by histidine 573. Histidine 727 provides a ligand contact to Mn(2+).

This sequence belongs to the CRISPR-associated protein Cas9 family. Subtype II-C subfamily. As to quaternary structure, monomer. Binds crRNA and tracrRNA. Requires Mg(2+) as cofactor.

CRISPR (clustered regularly interspaced short palindromic repeat) is an adaptive immune system that provides protection against mobile genetic elements (viruses, transposable elements and conjugative plasmids). CRISPR clusters contain spacers, sequences complementary to antecedent mobile elements, and target invading nucleic acids. CRISPR clusters are transcribed and processed into CRISPR RNA (crRNA). In type II CRISPR systems correct processing of pre-crRNA requires a trans-encoded small RNA (tracrRNA), endogenous ribonuclease 3 (rnc) and this protein. The tracrRNA serves as a guide for ribonuclease 3-aided processing of pre-crRNA. Subsequently Cas9/crRNA/tracrRNA endonucleolytically cleaves linear or circular dsDNA target complementary to the spacer; Cas9 is inactive in the absence of the 2 guide RNAs (gRNA). Cas9 recognizes the protospacer adjacent motif (PAM) in the CRISPR repeat sequences to help distinguish self versus nonself, as targets within the bacterial CRISPR locus do not have PAMs. PAM recognition is also required for catalytic activity. The polypeptide is CRISPR-associated endonuclease Cas9 (Corynebacterium diphtheriae (strain ATCC 700971 / NCTC 13129 / Biotype gravis)).